The following is a 293-amino-acid chain: MSADTVEQLLQCALSELTARFVTQATPVPTGLLEALDADPRAGAHALARRIRSRQEKNRAEGQRMRKLLRFETELWEQGHTHIAGVDEAGMAPLAGPVVAAAAVLPKGFRLKGLDDSKKILDAEKRESLAEAIKRDAVAWAVGRAEVEEIDRINIYHAGLLAMRRAVEGLSVKPDHLLVDARTVPECSVPQKGIIKGDALSLSIAAASILAKTTRDRWMAELDDQYPGYGLAAHKGYPTPHHLQVLREKGVLPIHRRSFAPVREALGLPTGSPPSALQAELFPEAPSRTGVKS.

The RNase H type-2 domain maps to 81-271; sequence THIAGVDEAG…VREALGLPTG (191 aa). 3 residues coordinate a divalent metal cation: Asp87, Glu88, and Asp180. Positions 273 to 293 are disordered; the sequence is PPSALQAELFPEAPSRTGVKS.

The protein belongs to the RNase HII family. Mn(2+) is required as a cofactor. The cofactor is Mg(2+).

The protein localises to the cytoplasm. It catalyses the reaction Endonucleolytic cleavage to 5'-phosphomonoester.. In terms of biological role, endonuclease that specifically degrades the RNA of RNA-DNA hybrids. This Myxococcus xanthus (strain DK1622) protein is Ribonuclease HII.